A 131-amino-acid polypeptide reads, in one-letter code: MNPAYRKAMLESEIQKLLMEALQQLRDPRLKKDFVTFSRVELSKDKRYADVYVSFLGTPEERKETVEILNRAKGFFRTFIAKNLRLYVAPEIRFYEDKGIEASVKVHQLLVQLGYDPLKDKEKKEEEKKEE.

This sequence belongs to the RbfA family. Monomer. Binds 30S ribosomal subunits, but not 50S ribosomal subunits or 70S ribosomes.

The protein localises to the cytoplasm. Its function is as follows. One of several proteins that assist in the late maturation steps of the functional core of the 30S ribosomal subunit. Associates with free 30S ribosomal subunits (but not with 30S subunits that are part of 70S ribosomes or polysomes). Required for efficient processing of 16S rRNA. May interact with the 5'-terminal helix region of 16S rRNA. This Thermotoga sp. (strain RQ2) protein is Ribosome-binding factor A.